A 194-amino-acid chain; its full sequence is Fibroblast growth factor 7 (194 aa).

Residues 1–31 form the signal peptide; it reads MRKWILTWILPSLLHRSCFHIICLVGTLSLD. N-linked (GlcNAc...) asparagine glycosylation is present at Asn-45.

Belongs to the heparin-binding growth factors family. Interacts with FGFBP1. Interacts with FGFR2. Affinity between fibroblast growth factors (FGFs) and their receptors is increased by heparan sulfate glycosaminoglycans that function as coreceptors.

The protein resides in the secreted. Plays an important role in the regulation of embryonic development, cell proliferation and cell differentiation. Required for normal branching morphogenesis. Growth factor active on keratinocytes. Possible major paracrine effector of normal epithelial cell proliferation. This is Fibroblast growth factor 7 (FGF7) from Sus scrofa (Pig).